A 60-amino-acid polypeptide reads, in one-letter code: Large ribosomal subunit protein bL32 (60 aa).

It belongs to the bacterial ribosomal protein bL32 family.

This chain is Large ribosomal subunit protein bL32, found in Synechococcus sp. (strain JA-3-3Ab) (Cyanobacteria bacterium Yellowstone A-Prime).